The chain runs to 372 residues: Delta-type opioid receptor (372 aa).

Topologically, residues 1–47 are extracellular; it reads MEPAPSAGAELQPPLFANASDAYPSACPSAGANASGPPGARSASSLA. 2 N-linked (GlcNAc...) asparagine glycosylation sites follow: asparagine 18 and asparagine 33. The helical transmembrane segment at 48–75 threads the bilayer; that stretch reads LAIAITALYSAVCAVGLLGNVLVMFGIV. Topologically, residues 76-85 are cytoplasmic; it reads RYTKMKTATN. The helical transmembrane segment at 86-110 threads the bilayer; sequence IYIFNLALADALATSTLPFQSAKYL. Topologically, residues 111-122 are extracellular; it reads METWPFGELLCK. Cysteines 121 and 198 form a disulfide. Residues 123-144 form a helical membrane-spanning segment; sequence AVLSIDYYNMFTSIFTLTMMSV. Topologically, residues 145–163 are cytoplasmic; sequence DRYIAVCHPVKALDFRTPA. Residues 164-186 traverse the membrane as a helical segment; sequence KAKLINICIWVLASGVGVPIMVM. Over 187–206 the chain is Extracellular; the sequence is AVTRPRDGAVVCMLQFPSPS. Residues 207–238 form a helical membrane-spanning segment; the sequence is WYWDTVTKICVFLFAFVVPILIITVCYGLMLL. At 239 to 261 the chain is on the cytoplasmic side; sequence RLRSVRLLSGSKEKDRSLRRITR. A helical membrane pass occupies residues 262-284; that stretch reads MVLVVVGAFVVCWAPIHIFVIVW. Residues 285 to 299 lie on the Extracellular side of the membrane; that stretch reads TLVDIDRRDPLVVAA. The helical transmembrane segment at 300-321 threads the bilayer; that stretch reads LHLCIALGYANSSLNPVLYAFL. The Cytoplasmic segment spans residues 322 to 372; it reads DENFKRCFRQLCRKPCGRPDPSSFSRAREATARERVTACTPSDGPGGGAAA. Cysteine 333 is lipidated: S-palmitoyl cysteine. Residues 340 to 372 form a disordered region; it reads PDPSSFSRAREATARERVTACTPSDGPGGGAAA. The span at 347–357 shows a compositional bias: basic and acidic residues; that stretch reads RAREATARERV.

The protein belongs to the G-protein coupled receptor 1 family. May form homooligomers. Forms a heterodimer with OPRM1. Interacts with GPRASP1. Interacts with RTP4; the interaction promotes cell surface localization of the OPRD1-OPRM1 heterodimer. N-glycosylated. In terms of processing, ubiquitinated. A basal ubiquitination seems not to be related to degradation. Ubiquitination is increased upon formation of OPRM1:OPRD1 oligomers leading to proteasomal degradation; the ubiquitination is diminished by RTP4. Detected in oocytes (at protein level). Detected in brain cortex, hypothalamus, hippocampus and olfactory bulb. Detected in oocytes.

The protein resides in the cell membrane. G-protein coupled receptor that functions as a receptor for endogenous enkephalins and for a subset of other opioids. Ligand binding causes a conformation change that triggers signaling via guanine nucleotide-binding proteins (G proteins) and modulates the activity of down-stream effectors, such as adenylate cyclase. Signaling leads to the inhibition of adenylate cyclase activity. Inhibits neurotransmitter release by reducing calcium ion currents and increasing potassium ion conductance. Plays a role in the perception of pain and in opiate-mediated analgesia. Plays a role in developing analgesic tolerance to morphine. The polypeptide is Delta-type opioid receptor (OPRD1) (Homo sapiens (Human)).